Reading from the N-terminus, the 854-residue chain is DNA topoisomerase 1 type prokaryotic (854 aa).

Positions 2–110 (SILILLESPG…KRLRFNAITK (109 aa)) constitute a Toprim domain. 2 residues coordinate Mg(2+): Glu-8 and Asp-79. One can recognise a Topo IA-type catalytic domain in the interval 124–610 (DKNLVDAQKA…DFYDKLKPIV (487 aa)). Residues 158–163 (SAGRVQ) form an interaction with DNA region. The active-site O-(5'-phospho-DNA)-tyrosine intermediate is the Tyr-302. The interval 802 to 854 (KSAPKGGSKTIRKPSQTKYSQTKSTKSTKSTKSTNKKFVGKSAKKTTKKTTKK) is disordered. Residues 814-834 (KPSQTKYSQTKSTKSTKSTKS) are compositionally biased toward low complexity. Over residues 835–854 (TNKKFVGKSAKKTTKKTTKK) the composition is skewed to basic residues.

It belongs to the type IA topoisomerase family. Requires Mg(2+) as cofactor.

It is found in the virion. It carries out the reaction ATP-independent breakage of single-stranded DNA, followed by passage and rejoining.. Its function is as follows. Releases the supercoiling and torsional tension of DNA, which is introduced during the DNA replication and transcription, by transiently cleaving and rejoining one strand of the DNA duplex. Introduces a single-strand break via transesterification at a target site in duplex DNA. The scissile phosphodiester is attacked by the catalytic tyrosine of the enzyme, resulting in the formation of a DNA-(5'-phosphotyrosyl)-enzyme intermediate and the expulsion of a 3'-OH DNA strand. The free DNA strand then undergoes passage around the unbroken strand, thus removing DNA supercoils. Finally, in the religation step, the DNA 3'-OH attacks the covalent intermediate to expel the active-site tyrosine and restore the DNA phosphodiester backbone. The polypeptide is DNA topoisomerase 1 type prokaryotic (TOP1P) (Acanthamoeba polyphaga (Amoeba)).